A 528-amino-acid chain; its full sequence is Capsid scaffolding protein (528 aa).

Residues histidine 46, serine 116, and histidine 135 each act as charge relay system in the active site. The interaction with pAP stretch occupies residues 270–288 (HGNYDAVESATATTAMSNQ). The tract at residues 394–432 (KKRHFQSDSEDELSFPGDPEYTKKRRRHKVDNDDDKEMA) is disordered. The Nuclear localization signal motif lies at 416-422 (KKRRRHK). The tract at residues 508–528 (SMDLLKLNKKLFVDALNKMDS) is interaction with major capsid protein.

Belongs to the herpesviridae capsid scaffolding protein family. Homomultimer. Interacts with major capsid protein. In terms of assembly, exists in a monomer-dimer equilibrium with the dimer being the active species. In terms of processing, capsid scaffolding protein is cleaved by assemblin after formation of the spherical procapsid. As a result, the capsid obtains its mature, icosahedral shape. Cleavages occur at two or more sites: release (R-site) and maturation (M-site).

The protein localises to the host cytoplasm. Its subcellular location is the host nucleus. It carries out the reaction Cleaves -Ala-|-Ser- and -Ala-|-Ala- bonds in the scaffold protein.. Functionally, acts as a scaffold protein by binding major capsid protein in the cytoplasm, inducing the nuclear localization of both proteins. Multimerizes in the nucleus such as major capsid protein forms the icosahedral T=16 capsid. Autocatalytic cleavage releases the assembly protein, and subsequently abolishes interaction with major capsid protein. Cleavages products are evicted from the capsid before or during DNA packaging. Its function is as follows. Protease that plays an essential role in virion assembly within the nucleus. Catalyzes the cleavage of the assembly protein after formation of the spherical procapsid. By that cleavage, the capsid matures and gains its icosahedral shape. The cleavage sites seem to include -Ala-Ser-, -Ala-Ala-, as well as Ala-Thr bonds. Assemblin and cleavages products are evicted from the capsid before or during DNA packaging. Plays a major role in capsid assembly. Acts as a scaffold protein by binding major capsid protein. Multimerizes in the nucleus such as major capsid protein forms the icosahedral T=16 capsid. Cleaved by assemblin after capsid completion. The cleavages products are evicted from the capsid before or during DNA packaging. The protein is Capsid scaffolding protein (U53) of Homo sapiens (Human).